The chain runs to 61 residues: Weak toxin CM-2 (61 aa).

Cystine bridges form between C3–C21, C14–C37, C41–C53, and C54–C59.

This sequence belongs to the three-finger toxin family. Short-chain subfamily. Orphan group VI sub-subfamily. In terms of tissue distribution, expressed by the venom gland.

Its subcellular location is the secreted. The sequence is that of Weak toxin CM-2 from Naja haje haje (Egyptian cobra).